Consider the following 641-residue polypeptide: Bifunctional protein glk (641 aa).

The interval 1 to 21 (MSTGAQTKAAEASQHADGPRL) is disordered. The glucokinase stretch occupies residues 1 to 340 (MSTGAQTKAA…QLSNRTGGAS (340 aa)). 23 to 28 (ADVGGT) contacts ATP. Residues 341–417 (SAVFERIRQM…LKLATGLTGT (77 aa)) form the HTH rpiR-type domain. The segment at 341 to 641 (SAVFERIRQM…SHGAAPAAKE (301 aa)) is putative HTH-type transcriptional regulator. Residues 377 to 396 (IVDIARKADVSQPTVIRFCR) constitute a DNA-binding region (H-T-H motif). In terms of domain architecture, SIS spans 461–600 (AIDILNNARR…AVGVAIRRAS (140 aa)). The helical transmembrane segment at 576 to 596 (SMISRILHLVMIDILAVGVAI) threads the bilayer.

The protein in the N-terminal section; belongs to the bacterial glucokinase family.

It is found in the membrane. It catalyses the reaction D-glucose + ATP = D-glucose 6-phosphate + ADP + H(+). The chain is Bifunctional protein glk (glk) from Burkholderia thailandensis (strain ATCC 700388 / DSM 13276 / CCUG 48851 / CIP 106301 / E264).